A 416-amino-acid chain; its full sequence is Casein kinase I isoform epsilon (416 aa).

The 269-residue stretch at 9 to 277 (YRLGRKIGSG…YLRQLFRNLF (269 aa)) folds into the Protein kinase domain. ATP-binding positions include 15-23 (IGSGSFGDI) and Lys38. Asp128 serves as the catalytic Proton acceptor. Residues 301–318 (PEDVDRERREHEREERMG) show a composition bias toward basic and acidic residues. The interval 301–416 (PEDVDRERRE…TSVPFDHLGK (116 aa)) is disordered. A phosphoserine mark is found at Ser343 and Ser354. Polar residues predominate over residues 351-365 (TPASRIQQTGNTSPR). At Thr362 the chain carries Phosphothreonine. Residue Ser363 is modified to Phosphoserine. Arg382 bears the Omega-N-methylarginine mark. Ser389, Ser405, and Ser408 each carry phosphoserine.

It belongs to the protein kinase superfamily. CK1 Ser/Thr protein kinase family. Casein kinase I subfamily. Monomer. Component of the circadian core oscillator, which includes the CRY proteins, CLOCK, or NPAS2, ARTNL/BMAL1 or ARTNL2/BMAL2, CSNK1D and/or CSNK1E, TIMELESS and the PER proteins. Interacts with ANKRD6. Interacts with PER1. Interacts with DBNDD2, LRP5, LRP6 and SOCS3. Interacts with SNAI1 (via zinc fingers). Interacts with DDX3X; this interaction greatly enhances CSNK1E affinity for ATP and DVL2 phosphorylation, but inhibits DDX3X ATPase/helicase activity. In the presence of RNA, the interaction is decreased. Interacts with FAM83A, FAM83B, FAM83E and FAM83H (via DUF1669). Post-translationally, autophosphorylated. Partially dephosphorylated by PPP5C. May be dephosphorylated by PP1. As to expression, expressed in all tissues examined, including brain, heart, lung, liver, pancreas, kidney, placenta and skeletal muscle. Expressed in monocytes and lymphocytes but not in granulocytes.

The protein resides in the cytoplasm. It is found in the nucleus. The catalysed reaction is L-seryl-[protein] + ATP = O-phospho-L-seryl-[protein] + ADP + H(+). The enzyme catalyses L-threonyl-[protein] + ATP = O-phospho-L-threonyl-[protein] + ADP + H(+). Its activity is regulated as follows. Phosphorylation leads to a decrease in the catalytic activity. In terms of biological role, casein kinases are operationally defined by their preferential utilization of acidic proteins such as caseins as substrates. Participates in Wnt signaling. Phosphorylates DVL1. Phosphorylates DVL2. Phosphorylates NEDD9/HEF1. Central component of the circadian clock. In balance with PP1, determines the circadian period length, through the regulation of the speed and rhythmicity of PER1 and PER2 phosphorylation. Controls PER1 and PER2 nuclear transport and degradation. Inhibits cytokine-induced granuloytic differentiation. The polypeptide is Casein kinase I isoform epsilon (Csnk1e) (Mus musculus (Mouse)).